Consider the following 91-residue polypeptide: Small ribosomal subunit protein uS19 (91 aa).

It belongs to the universal ribosomal protein uS19 family.

In terms of biological role, protein S19 forms a complex with S13 that binds strongly to the 16S ribosomal RNA. This chain is Small ribosomal subunit protein uS19, found in Pseudoalteromonas atlantica (strain T6c / ATCC BAA-1087).